We begin with the raw amino-acid sequence, 157 residues long: Protein BeeE (157 aa).

It belongs to the phage portal family.

The sequence is that of Protein BeeE (beeE) from Escherichia coli (strain K12).